A 577-amino-acid chain; its full sequence is 2-succinyl-5-enolpyruvyl-6-hydroxy-3-cyclohexene-1-carboxylate synthase (577 aa).

This sequence belongs to the TPP enzyme family. MenD subfamily. In terms of assembly, homodimer. It depends on Mg(2+) as a cofactor. Mn(2+) is required as a cofactor. Requires thiamine diphosphate as cofactor.

The enzyme catalyses isochorismate + 2-oxoglutarate + H(+) = 5-enolpyruvoyl-6-hydroxy-2-succinyl-cyclohex-3-ene-1-carboxylate + CO2. It participates in quinol/quinone metabolism; 1,4-dihydroxy-2-naphthoate biosynthesis; 1,4-dihydroxy-2-naphthoate from chorismate: step 2/7. It functions in the pathway quinol/quinone metabolism; menaquinone biosynthesis. Catalyzes the thiamine diphosphate-dependent decarboxylation of 2-oxoglutarate and the subsequent addition of the resulting succinic semialdehyde-thiamine pyrophosphate anion to isochorismate to yield 2-succinyl-5-enolpyruvyl-6-hydroxy-3-cyclohexene-1-carboxylate (SEPHCHC). This Enterococcus faecalis (strain ATCC 700802 / V583) protein is 2-succinyl-5-enolpyruvyl-6-hydroxy-3-cyclohexene-1-carboxylate synthase.